The primary structure comprises 435 residues: Putative F-box/kelch-repeat protein At1g13200 (435 aa).

Residues 1-29 (MKDAEKREVIASSSLQRKRNRGRRLRKRR) are disordered. Residues 16–29 (QRKRNRGRRLRKRR) are compositionally biased toward basic residues. The F-box domain occupies 37–82 (LMVPSSLPNDVLEEIFLRFPVKALIRLKSLSKQWRSTIESRSFEER). 4 Kelch repeats span residues 164–217 (SVYV…DYKL), 224–270 (DKYI…PASA), 273–317 (SVYW…HIDM), and 322–368 (NSLC…EKRD).

The polypeptide is Putative F-box/kelch-repeat protein At1g13200 (Arabidopsis thaliana (Mouse-ear cress)).